Here is a 256-residue protein sequence, read N- to C-terminus: MPGLKITLLQQPLVWMDGPANLRHFDRQLEGITGRDVIVLPEMFTSGFAMEAAASSLAQDDVVNWMTAKAQQCNALIAGSVALQTESGSVNRFLLVEPGGTVHFYDKRHLFRMADEHLHYKAGNARVIVEWRGWRILPLVCYDLRFPVWSRNLNDYDLALYVANWPAPRSLHWQALLTARAIENQAYVAGCNRVGSDGNGCHYRGDSRVINPQGEIIATADAHQATRIDAELSMAALREYREKFPAWQDADEFRLW.

Residues 4 to 234 form the CN hydrolase domain; the sequence is LKITLLQQPL…ATRIDAELSM (231 aa). Glutamate 42 functions as the Proton acceptor in the catalytic mechanism. Lysine 107 acts as the Proton donor in catalysis. The active-site Nucleophile is the cysteine 141.

It belongs to the carbon-nitrogen hydrolase superfamily. NIT1/NIT2 family.

The enzyme catalyses a monoamide of a dicarboxylate + H2O = a dicarboxylate + NH4(+). In terms of biological role, hydrolyzes alpha-ketoglutaramate (a-KGM) to alpha-ketoglutarate (alpha-KG) and ammonia, has weak activity on L-glutamine, almost no activity on deaminated glutathione (dGSH) and none on glutathione. May function as a metabolite repair enzyme. This is Omega-amidase YafV (yafV) from Escherichia coli (strain K12).